A 322-amino-acid chain; its full sequence is Elongation factor Ts, mitochondrial (322 aa).

It belongs to the EF-Ts family.

The protein resides in the mitochondrion. Its function is as follows. Associates with the EF-Tu.GDP complex and induces the exchange of GDP to GTP. It remains bound to the aminoacyl-tRNA.EF-Tu.GTP complex up to the GTP hydrolysis stage on the ribosome. This Chlamydomonas reinhardtii (Chlamydomonas smithii) protein is Elongation factor Ts, mitochondrial.